The chain runs to 356 residues: Phenylalanine--tRNA ligase alpha subunit (356 aa).

E258 serves as a coordination point for Mg(2+).

This sequence belongs to the class-II aminoacyl-tRNA synthetase family. Phe-tRNA synthetase alpha subunit type 1 subfamily. In terms of assembly, tetramer of two alpha and two beta subunits. Requires Mg(2+) as cofactor.

It localises to the cytoplasm. The catalysed reaction is tRNA(Phe) + L-phenylalanine + ATP = L-phenylalanyl-tRNA(Phe) + AMP + diphosphate + H(+). The protein is Phenylalanine--tRNA ligase alpha subunit of Macrococcus caseolyticus (strain JCSC5402) (Macrococcoides caseolyticum).